A 242-amino-acid chain; its full sequence is Mitochondrial intermembrane space import and assembly protein 40 (242 aa).

Residues 1-18 (MFARSFSNASRTIARRSL) constitute a mitochondrion transit peptide. The segment covering 1–22 (MFARSFSNASRTIARRSLSTRS) has biased composition (polar residues). Positions 1-30 (MFARSFSNASRTIARRSLSTRSGPAPSSLW) are disordered. The Mitochondrial matrix portion of the chain corresponds to 19-34 (STRSGPAPSSLWSSRN). A helical; Signal-anchor for type II membrane protein membrane pass occupies residues 35-51 (AVIAGTTLAITALAVTS). Residues 52–242 (ERRKVFNESA…EETAAPAAAP (191 aa)) are Mitochondrial intermembrane-facing. Positions 58–111 (NESAQKATSPRDSIIAQDSLKENVHKKSVRQDEFSGESTKPEASTSSDSVEKAA) are disordered. A compositionally biased stretch (polar residues) spans 59–68 (ESAQKATSPR). The segment covering 76–90 (SLKENVHKKSVRQDE) has biased composition (basic and acidic residues). Over residues 93–105 (GESTKPEASTSSD) the composition is skewed to polar residues. 3 disulfides stabilise this stretch: Cys144–Cys146, Cys155–Cys188, and Cys165–Cys178. One can recognise a CHCH domain in the interval 152–196 (TGPCGEQFKAAFSCFVYSEAEPKGVDCVELFKVMQDCFREHPEIY). 2 consecutive short sequence motifs (cx9C motif) follow at residues 155–165 (CGEQFKAAFSC) and 178–188 (CVELFKVMQDC). Positions 215–242 (DEAPPQEGTMEEKVEAAKEETAAPAAAP) are disordered. A compositionally biased stretch (basic and acidic residues) spans 224–235 (MEEKVEAAKEET).

Monomer. Cu(2+) is required as a cofactor. It depends on Zn(2+) as a cofactor.

The protein resides in the mitochondrion inner membrane. Functionally, required for the import and folding of small cysteine-containing proteins (small Tim) in the mitochondrial intermembrane space (IMS). Forms a redox cycle with ERV1 that involves a disulfide relay system. Precursor proteins to be imported into the IMS are translocated in their reduced form into the mitochondria. The oxidized form of MIA40 forms a transient intermolecular disulfide bridge with the reduced precursor protein, resulting in oxidation of the precursor protein that now contains an intramolecular disulfide bond and is able to undergo folding in the IMS. This chain is Mitochondrial intermembrane space import and assembly protein 40 (MIA40), found in Cryptococcus neoformans var. neoformans serotype D (strain B-3501A) (Filobasidiella neoformans).